The sequence spans 216 residues: Probable disulfide bond formation protein D (216 aa).

Positions 1-25 are cleaved as a signal peptide; the sequence is MKSNKLMALGIVFSIAVLIVIGTIA. Cys-65 and Cys-68 form a disulfide bridge.

Belongs to the thioredoxin family. DsbA subfamily.

May be required for disulfide bond formation in some proteins. The protein is Probable disulfide bond formation protein D (bdbD) of Bacillus cereus (strain ATCC 14579 / DSM 31 / CCUG 7414 / JCM 2152 / NBRC 15305 / NCIMB 9373 / NCTC 2599 / NRRL B-3711).